The following is a 576-amino-acid chain: MSEQIAVKTILSGTELGPLADNERLKRESKNLRGTIVEDLQDRITGGFTNDNFQLIRFHGMYQQDDRDIRAERAKQKLEPLHNVMLRARMPGGIITPKQWLAIDKFAEENTSYGSLRLTTRQTFQFHGVLKPNIKLMHQTLNSIGIDSIATAGDVNRNVLCTTNPVESELHQEAYEWAKKISEHLLPKTRAYAEIWLDGEKLETTDEEPILGSNYLPRKFKTTVVIPPQNDVDVHANDLNFIAIANNGKLVGFNVLVGGGLAMTHGDTATYPRRADDFGFVPLEKTLEVAAAVVTTQRDWGNRSNRKNAKTKYTLDRVGVDVFKAEVEKRAGIQFEASRPYELTERGDRIGWVDGIDGKHHLALFIENGRLLDYPGKPLKTGVAEIAKIHQGDFRMTANQNLIVAGVPAEQKDQIEQIAREHGLIDDGHSEQRKNSMACVAFPTCPLAMAEAERFLPEFVTEIEGVLKKHNLPEDDNIIFRVTGCPNGCGRAMLAEIGLIGKAPGRYNFHLGGNRSGTRVPKMYKENITDRQILSEIDELVGRWATERQENEGFGDFTIRAGIVDEVKVSKRDFYA.

Positions 439, 445, 485, and 489 each coordinate [4Fe-4S] cluster. C489 is a binding site for siroheme.

This sequence belongs to the nitrite and sulfite reductase 4Fe-4S domain family. As to quaternary structure, alpha(8)-beta(8). The alpha component is a flavoprotein, the beta component is a hemoprotein. Siroheme serves as cofactor. Requires [4Fe-4S] cluster as cofactor.

It catalyses the reaction hydrogen sulfide + 3 NADP(+) + 3 H2O = sulfite + 3 NADPH + 4 H(+). The protein operates within sulfur metabolism; hydrogen sulfide biosynthesis; hydrogen sulfide from sulfite (NADPH route): step 1/1. Functionally, component of the sulfite reductase complex that catalyzes the 6-electron reduction of sulfite to sulfide. This is one of several activities required for the biosynthesis of L-cysteine from sulfate. This Aliivibrio salmonicida (strain LFI1238) (Vibrio salmonicida (strain LFI1238)) protein is Sulfite reductase [NADPH] hemoprotein beta-component.